A 112-amino-acid polypeptide reads, in one-letter code: Putative pterin-4-alpha-carbinolamine dehydratase (112 aa).

The protein belongs to the pterin-4-alpha-carbinolamine dehydratase family.

It carries out the reaction (4aS,6R)-4a-hydroxy-L-erythro-5,6,7,8-tetrahydrobiopterin = (6R)-L-erythro-6,7-dihydrobiopterin + H2O. The sequence is that of Putative pterin-4-alpha-carbinolamine dehydratase from Shewanella baltica (strain OS223).